Reading from the N-terminus, the 156-residue chain is MSLTDIALLVFIVLFLLYAIYDEAIMPRQRSATLLRVNLKRRNKADSLIFIGLLAILVYRNISDQGAPFTTWLLATLMVVAIYIFYLRWPKLLFKQQGFYYGNVFIDYARIRGMNLSEDGFLVIDLEKRRLLIQVANLDSLDEIFKFLLEHQQKPA.

A run of 3 helical transmembrane segments spans residues 6-26 (IALL…EAIM), 46-63 (DSLI…RNIS), and 67-87 (APFT…IFYL).

It belongs to the UPF0266 family.

Its subcellular location is the cell inner membrane. This is UPF0266 membrane protein NT01EI_1718 from Edwardsiella ictaluri (strain 93-146).